The following is a 320-amino-acid chain: GTP 3',8-cyclase (320 aa).

Positions 4–226 (TFQRSINYMR…PIITDATSPA (223 aa)) constitute a Radical SAM core domain. Arg-13 provides a ligand contact to GTP. Cys-20 and Cys-24 together coordinate [4Fe-4S] cluster. Position 26 (Tyr-26) interacts with S-adenosyl-L-methionine. Cys-27 provides a ligand contact to [4Fe-4S] cluster. Arg-63 is a binding site for GTP. Residue Gly-67 coordinates S-adenosyl-L-methionine. Thr-94 is a binding site for GTP. Ser-118 contacts S-adenosyl-L-methionine. Position 155 (Lys-155) interacts with GTP. Residue Met-189 participates in S-adenosyl-L-methionine binding. 2 residues coordinate [4Fe-4S] cluster: Cys-249 and Cys-252. 254 to 256 (RIR) lines the GTP pocket. [4Fe-4S] cluster is bound at residue Cys-266.

This sequence belongs to the radical SAM superfamily. MoaA family. As to quaternary structure, monomer and homodimer. [4Fe-4S] cluster is required as a cofactor.

The catalysed reaction is GTP + AH2 + S-adenosyl-L-methionine = (8S)-3',8-cyclo-7,8-dihydroguanosine 5'-triphosphate + 5'-deoxyadenosine + L-methionine + A + H(+). The protein operates within cofactor biosynthesis; molybdopterin biosynthesis. In terms of biological role, catalyzes the cyclization of GTP to (8S)-3',8-cyclo-7,8-dihydroguanosine 5'-triphosphate. The chain is GTP 3',8-cyclase from Alkaliphilus metalliredigens (strain QYMF).